A 198-amino-acid polypeptide reads, in one-letter code: Peptidyl-tRNA hydrolase (198 aa).

Tyrosine 18 is a tRNA binding site. Residue histidine 23 is the Proton acceptor of the active site. Phenylalanine 69, asparagine 71, and asparagine 117 together coordinate tRNA.

The protein belongs to the PTH family. In terms of assembly, monomer.

The protein resides in the cytoplasm. It carries out the reaction an N-acyl-L-alpha-aminoacyl-tRNA + H2O = an N-acyl-L-amino acid + a tRNA + H(+). Its function is as follows. Hydrolyzes ribosome-free peptidyl-tRNAs (with 1 or more amino acids incorporated), which drop off the ribosome during protein synthesis, or as a result of ribosome stalling. Catalyzes the release of premature peptidyl moieties from peptidyl-tRNA molecules trapped in stalled 50S ribosomal subunits, and thus maintains levels of free tRNAs and 50S ribosomes. The chain is Peptidyl-tRNA hydrolase from Idiomarina loihiensis (strain ATCC BAA-735 / DSM 15497 / L2-TR).